The primary structure comprises 267 residues: Eukaryotic translation initiation factor 3 subunit J (267 aa).

2 disordered regions span residues 1–128 and 220–241; these read MAPS…DIDL and KMRE…KTKV. The segment covering 28–46 has biased composition (acidic residues); that stretch reads DEEEEDVLDSWDAAEDSEV. Positions 44–96 form a coiled coil; that stretch reads SEVEREKAAKAAAAAAKAEAEAAAKKKSKAQRIEEHKQERKKQAEANESDEDS. The segment covering 74 to 88 has biased composition (basic and acidic residues); the sequence is QRIEEHKQERKKQAE. Over residues 90 to 100 the composition is skewed to acidic residues; the sequence is NESDEDSDEDE. 2 stretches are compositionally biased toward basic and acidic residues: residues 108–121 and 220–231; these read RRTE…HAQD and KMREERAADKGN.

Belongs to the eIF-3 subunit J family. As to quaternary structure, component of the eukaryotic translation initiation factor 3 (eIF-3) complex.

It is found in the cytoplasm. Functionally, component of the eukaryotic translation initiation factor 3 (eIF-3) complex, which is involved in protein synthesis of a specialized repertoire of mRNAs and, together with other initiation factors, stimulates binding of mRNA and methionyl-tRNAi to the 40S ribosome. The eIF-3 complex specifically targets and initiates translation of a subset of mRNAs involved in cell proliferation. The chain is Eukaryotic translation initiation factor 3 subunit J (hcr1) from Neosartorya fischeri (strain ATCC 1020 / DSM 3700 / CBS 544.65 / FGSC A1164 / JCM 1740 / NRRL 181 / WB 181) (Aspergillus fischerianus).